The primary structure comprises 454 residues: Probable ECA polymerase (454 aa).

The next 11 membrane-spanning stretches (helical) occupy residues 3-23 (LGQFGGLFCIYLIAVIFILTL), 39-59 (FSMLYLLTFYFGFPLTCMLVF), 61-81 (FGVAVVPVEYLLYAMLSATAF), 119-139 (LALVAVGTVGIFFMQNGFLLF), 154-174 (GVALKRFFYFFIPAMLVVYFL), 180-200 (AWFFFLASTVAFGILTYVIVG), 201-221 (GTRANIIIAFSLFLFIGIVRG), 222-242 (WITLWMLAAAGVFGIVGMFWL), 340-360 (LVVMGGVLFIPLGAIVVGLII), 377-397 (YKAAILQSFCFGAVFNIIVLA), and 409-429 (VFFCVIFGACLVLAKLLYWLF).

This sequence belongs to the WzyE family. In terms of assembly, probably part of a complex composed of WzxE, WzyE and WzzE.

The protein localises to the cell inner membrane. The protein operates within bacterial outer membrane biogenesis; enterobacterial common antigen biosynthesis. Probably involved in the polymerization of enterobacterial common antigen (ECA) trisaccharide repeat units. This chain is Probable ECA polymerase, found in Yersinia pestis bv. Antiqua (strain Angola).